The sequence spans 232 residues: Large ribosomal subunit protein uL1 (232 aa).

The protein belongs to the universal ribosomal protein uL1 family. As to quaternary structure, part of the 50S ribosomal subunit.

In terms of biological role, binds directly to 23S rRNA. The L1 stalk is quite mobile in the ribosome, and is involved in E site tRNA release. Functionally, protein L1 is also a translational repressor protein, it controls the translation of the L11 operon by binding to its mRNA. In Xanthomonas campestris pv. campestris (strain B100), this protein is Large ribosomal subunit protein uL1.